The sequence spans 155 residues: uncharacterized protein (155 aa).

5 helical membrane-spanning segments follow: residues 4-24 (IVGALAVFVITYALFSAAGYL), 46-66 (AIGIIWAILFALISLSAAIVY), 77-97 (FWFTLLINYVLNQAFSYFQFT), 101-121 (LLAASLDCLLVAITAIVLLII), and 130-150 (SYLLLPYFLWSAFATFLSFTI).

It belongs to the TspO/BZRP family.

The protein resides in the cell membrane. This is an uncharacterized protein from Bacillus subtilis (strain 168).